Consider the following 427-residue polypeptide: Septin-8 (427 aa).

The region spanning 39 to 305 (QGFCFNILCV…ELYRRCKLEE (267 aa)) is the Septin-type G domain. The G1 motif stretch occupies residues 49–56 (GETGIGKS). Residues 49 to 56 (GETGIGKS), G104, 185 to 193 (KADTISKSE), G239, and R254 contribute to the GTP site. Residues 101-104 (DTVG) form a G3 motif region. Positions 184 to 187 (AKAD) are G4 motif. A coiled-coil region spans residues 321 to 409 (QETYEAKRKE…KAAMEALQSQ (89 aa)). The interval 373 to 427 (RVHQEESKKVEDKRRDLEEEMNSFNRRKAAMEALQSQSFQATSQQPLKKDKDRKN) is disordered. Residues 374–389 (VHQEESKKVEDKRRDL) show a composition bias toward basic and acidic residues. The span at 406–418 (LQSQSFQATSQQP) shows a compositional bias: polar residues.

The protein belongs to the TRAFAC class TrmE-Era-EngA-EngB-Septin-like GTPase superfamily. Septin GTPase family.

It localises to the cytoplasm. It is found in the cytoskeleton. The protein resides in the synapse. The protein localises to the cell projection. Its subcellular location is the axon. It localises to the cytoplasmic vesicle. It is found in the secretory vesicle. The protein resides in the synaptic vesicle membrane. The protein localises to the presynapse. The polypeptide is Septin-8 (Xenopus tropicalis (Western clawed frog)).